Here is a 161-residue protein sequence, read N- to C-terminus: Phosphopantetheine adenylyltransferase (161 aa).

Position 9 (T9) interacts with substrate. ATP is bound by residues 9 to 10 (TF) and H17. Positions 41, 73, and 87 each coordinate substrate. Residues 88 to 90 (GLR), E98, and 123 to 129 (YQFISGT) contribute to the ATP site.

Belongs to the bacterial CoaD family. As to quaternary structure, homohexamer. Mg(2+) serves as cofactor.

It is found in the cytoplasm. It carries out the reaction (R)-4'-phosphopantetheine + ATP + H(+) = 3'-dephospho-CoA + diphosphate. It functions in the pathway cofactor biosynthesis; coenzyme A biosynthesis; CoA from (R)-pantothenate: step 4/5. In terms of biological role, reversibly transfers an adenylyl group from ATP to 4'-phosphopantetheine, yielding dephospho-CoA (dPCoA) and pyrophosphate. The chain is Phosphopantetheine adenylyltransferase from Cupriavidus necator (strain ATCC 17699 / DSM 428 / KCTC 22496 / NCIMB 10442 / H16 / Stanier 337) (Ralstonia eutropha).